The chain runs to 465 residues: A-type ATP synthase subunit B (465 aa).

Belongs to the ATPase alpha/beta chains family. In terms of assembly, has multiple subunits with at least A(3), B(3), C, D, E, F, H, I and proteolipid K(x).

The protein localises to the cell membrane. In terms of biological role, component of the A-type ATP synthase that produces ATP from ADP in the presence of a proton gradient across the membrane. The B chain is a regulatory subunit. The protein is A-type ATP synthase subunit B of Sulfurisphaera tokodaii (strain DSM 16993 / JCM 10545 / NBRC 100140 / 7) (Sulfolobus tokodaii).